Consider the following 71-residue polypeptide: QDLPPLDPSAEQAQALNYVKDTAEAADHPAHQEGEQCDNCMFFQADSQGCQLFPQNSVEPAGWCQSWTAQN.

Residue Gln1 is modified to Pyrrolidone carboxylic acid. [4Fe-4S] cluster is bound by residues Cys37, Cys40, Cys50, and Cys64.

Belongs to the high-potential iron-sulfur protein (HiPIP) family. As to quaternary structure, homodimer.

Its function is as follows. Specific class of high-redox-potential 4Fe-4S ferredoxins. Functions in anaerobic electron transport in most purple and in some other photosynthetic bacteria and in at least one genus (Paracoccus) of halophilic, denitrifying bacteria. The chain is High-potential iron-sulfur protein (hip) from Halomonas halodenitrificans (strain ATCC 12084 / NCIMB 8669) (Paracoccus halodenitrificans).